Consider the following 602-residue polypeptide: Myotubularin (602 aa).

Positions 1–16 (MATSSTPKYNSNSLEN) are enriched in polar residues. A disordered region spans residues 1–33 (MATSSTPKYNSNSLENSVRRSPGDGINHEQNDE). Residues 17–33 (SVRRSPGDGINHEQNDE) show a composition bias toward basic and acidic residues. Positions 28 to 96 (HEQNDEISRL…GVIARIEKMG (69 aa)) constitute a GRAM domain. A Myotubularin phosphatase domain is found at 162–537 (GWAVYDAMTE…RHLELWVNYY (376 aa)). Positions 287, 312, and 313 each coordinate a 1,2-diacyl-sn-glycero-3-phospho-(1D-myo-inositol-3,5-bisphosphate). A 1,2-diacyl-sn-glycero-3-phospho-(1D-myo-inositol-3-phosphate) is bound by residues N287, N312, and I313. C374 (phosphocysteine intermediate) is an active-site residue. 8 residues coordinate a 1,2-diacyl-sn-glycero-3-phospho-(1D-myo-inositol-3,5-bisphosphate): S375, D376, G377, W378, D379, R380, K416, and R420. Residues S375, D376, G377, W378, D379, and R380 each contribute to the a 1,2-diacyl-sn-glycero-3-phospho-(1D-myo-inositol-3-phosphate) site. Residue R420 coordinates a 1,2-diacyl-sn-glycero-3-phospho-(1D-myo-inositol-3-phosphate). Positions 577–602 (NSPKINRSTTSPSSPSQMMPQVQTPF) are disordered. Residues 584–602 (STTSPSSPSQMMPQVQTPF) are compositionally biased toward low complexity.

This sequence belongs to the protein-tyrosine phosphatase family. Non-receptor class myotubularin subfamily.

The protein localises to the cytoplasm. Its subcellular location is the cell membrane. The protein resides in the cell projection. It is found in the filopodium. It localises to the ruffle. The protein localises to the late endosome. Its subcellular location is the myofibril. The protein resides in the sarcomere. It catalyses the reaction a 1,2-diacyl-sn-glycero-3-phospho-(1D-myo-inositol-3-phosphate) + H2O = a 1,2-diacyl-sn-glycero-3-phospho-(1D-myo-inositol) + phosphate. The catalysed reaction is a 1,2-diacyl-sn-glycero-3-phospho-(1D-myo-inositol-3,5-bisphosphate) + H2O = a 1,2-diacyl-sn-glycero-3-phospho-(1D-myo-inositol-5-phosphate) + phosphate. The enzyme catalyses 1,2-dioctanoyl-sn-glycero-3-phospho-(1-D-myo-inositol-3-phosphate) + H2O = 1,2-dioctanoyl-sn-glycero-3-phospho-(1D-myo-inositol) + phosphate. It carries out the reaction 1,2-dioctanoyl-sn-glycero-3-phospho-(1D-myo-inositol-3,5-bisphosphate) + H2O = 1,2-dioctanoyl-sn-glycero-3-phospho-(1D-myo-inositol-5-phosphate) + phosphate. It catalyses the reaction 1,2-dihexadecanoyl-sn-glycero-3-phospho-(1D-myo-inositol-3,5-phosphate) + H2O = 1,2-dihexadecanoyl-sn-glycero-3-phospho-(1D-myo-inositol-5-phosphate) + phosphate. Lipid phosphatase which dephosphorylates phosphatidylinositol 3-monophosphate (PI3P) and phosphatidylinositol 3,5-bisphosphate (PI(3,5)P2). This chain is Myotubularin (mtm1), found in Xenopus laevis (African clawed frog).